The sequence spans 376 residues: Meiotically up-regulated gene 183 protein (376 aa).

The interval Ser-334–Glu-376 is disordered. Residues Asp-353–Glu-376 are compositionally biased toward acidic residues.

The protein belongs to the RTT106 family.

Has a role in meiosis. The protein is Meiotically up-regulated gene 183 protein (mug183) of Schizosaccharomyces pombe (strain 972 / ATCC 24843) (Fission yeast).